A 199-amino-acid polypeptide reads, in one-letter code: NAD(P)H dehydrogenase (quinone) (199 aa).

One can recognise a Flavodoxin-like domain in the interval 4–190 (ILVLYYSSWG…EGARFQGKRL (187 aa)). FMN is bound by residues 10–15 (SSWGHM) and 78–80 (TRY). Trp12 provides a ligand contact to NAD(+). Trp98 provides a ligand contact to substrate. FMN contacts are provided by residues 113 to 119 (STATQHG) and His134. Positions 155 to 175 (VRGGAPYGMTTTSDTDGSRMP) are disordered.

The protein belongs to the WrbA family. The cofactor is FMN.

The catalysed reaction is a quinone + NADH + H(+) = a quinol + NAD(+). It carries out the reaction a quinone + NADPH + H(+) = a quinol + NADP(+). The protein is NAD(P)H dehydrogenase (quinone) of Chelativorans sp. (strain BNC1).